A 461-amino-acid chain; its full sequence is Photosystem II CP43 reaction center protein (461 aa).

A propeptide spanning residues Met-1–Glu-2 is cleaved from the precursor. An N-acetylthreonine modification is found at Thr-3. At Thr-3 the chain carries Phosphothreonine. 5 helical membrane passes run Leu-57–Ala-81, Leu-122–Asn-143, Lys-166–Thr-188, Lys-243–Ser-263, and Trp-279–Ala-300. Glu-355 is a binding site for [CaMn4O5] cluster. Residues Arg-435–Pro-459 traverse the membrane as a helical segment.

Belongs to the PsbB/PsbC family. PsbC subfamily. PSII is composed of 1 copy each of membrane proteins PsbA, PsbB, PsbC, PsbD, PsbE, PsbF, PsbH, PsbI, PsbJ, PsbK, PsbL, PsbM, PsbT, PsbX, PsbY, PsbZ, Psb30/Ycf12, at least 3 peripheral proteins of the oxygen-evolving complex and a large number of cofactors. It forms dimeric complexes. Binds multiple chlorophylls and provides some of the ligands for the Ca-4Mn-5O cluster of the oxygen-evolving complex. It may also provide a ligand for a Cl- that is required for oxygen evolution. PSII binds additional chlorophylls, carotenoids and specific lipids. serves as cofactor.

It is found in the plastid. The protein localises to the chloroplast thylakoid membrane. Functionally, one of the components of the core complex of photosystem II (PSII). It binds chlorophyll and helps catalyze the primary light-induced photochemical processes of PSII. PSII is a light-driven water:plastoquinone oxidoreductase, using light energy to abstract electrons from H(2)O, generating O(2) and a proton gradient subsequently used for ATP formation. In Chlorokybus atmophyticus (Soil alga), this protein is Photosystem II CP43 reaction center protein.